The sequence spans 412 residues: DNA polymerase IV 2 (412 aa).

The UmuC domain occupies 7 to 192; the sequence is IFLVDMQSFY…LPVGSMFGVG (186 aa). 2 residues coordinate Mg(2+): Asp11 and Asp107. Glu108 is an active-site residue.

Belongs to the DNA polymerase type-Y family. Monomer. It depends on Mg(2+) as a cofactor.

Its subcellular location is the cytoplasm. The catalysed reaction is DNA(n) + a 2'-deoxyribonucleoside 5'-triphosphate = DNA(n+1) + diphosphate. Functionally, poorly processive, error-prone DNA polymerase involved in untargeted mutagenesis. Copies undamaged DNA at stalled replication forks, which arise in vivo from mismatched or misaligned primer ends. These misaligned primers can be extended by PolIV. Exhibits no 3'-5' exonuclease (proofreading) activity. May be involved in translesion synthesis (TSL), in conjunction with the beta clamp from PolIII. In Bacillus subtilis (strain 168), this protein is DNA polymerase IV 2 (dinB2).